The following is a 193-amino-acid chain: Probable nicotinate-nucleotide adenylyltransferase (193 aa).

The protein belongs to the NadD family.

The catalysed reaction is nicotinate beta-D-ribonucleotide + ATP + H(+) = deamido-NAD(+) + diphosphate. It functions in the pathway cofactor biosynthesis; NAD(+) biosynthesis; deamido-NAD(+) from nicotinate D-ribonucleotide: step 1/1. In terms of biological role, catalyzes the reversible adenylation of nicotinate mononucleotide (NaMN) to nicotinic acid adenine dinucleotide (NaAD). In Chlorobium phaeovibrioides (strain DSM 265 / 1930) (Prosthecochloris vibrioformis (strain DSM 265)), this protein is Probable nicotinate-nucleotide adenylyltransferase.